A 208-amino-acid polypeptide reads, in one-letter code: Cytochrome c biogenesis ATP-binding export protein CcmA (208 aa).

In terms of domain architecture, ABC transporter spans 3-206 (LSGKDLTAYR…LEKFLPPQEK (204 aa)). Position 35–42 (35–42 (GPNGIGKS)) interacts with ATP.

It belongs to the ABC transporter superfamily. CcmA exporter (TC 3.A.1.107) family. The complex is composed of two ATP-binding proteins (CcmA) and two transmembrane proteins (CcmB).

The protein localises to the cell inner membrane. The enzyme catalyses heme b(in) + ATP + H2O = heme b(out) + ADP + phosphate + H(+). Functionally, part of the ABC transporter complex CcmAB involved in the biogenesis of c-type cytochromes; once thought to export heme, this seems not to be the case, but its exact role is uncertain. Responsible for energy coupling to the transport system. This chain is Cytochrome c biogenesis ATP-binding export protein CcmA, found in Bartonella henselae (strain ATCC 49882 / DSM 28221 / CCUG 30454 / Houston 1) (Rochalimaea henselae).